A 749-amino-acid polypeptide reads, in one-letter code: Disintegrin and metalloproteinase domain-containing protein 10 (749 aa).

Positions 1–18 (MVLPTVLILLLSWAAGLG) are cleaved as a signal peptide. The propeptide occupies 19-214 (GQYGNPLNKY…MGPELLRKKR (196 aa)). Positions 171–178 (GGCADHSV) match the Cysteine switch motif. Residue Cys-173 coordinates Zn(2+). At 215-673 (TTLAERNTCQ…SPQLYENIAE (459 aa)) the chain is on the extracellular side. The Peptidase M12B domain maps to 221 to 457 (NTCQLYIQTD…KRNNCFVESG (237 aa)). Disulfide bonds link Cys-223-Cys-314, Cys-345-Cys-452, Cys-400-Cys-436, Cys-461-Cys-496, Cys-472-Cys-485, Cys-474-Cys-480, Cys-484-Cys-516, Cys-504-Cys-512, Cys-511-Cys-537, Cys-525-Cys-544, Cys-531-Cys-563, Cys-556-Cys-568, Cys-573-Cys-599, Cys-581-Cys-608, Cys-583-Cys-598, Cys-595-Cys-640, and Cys-633-Cys-646. 2 N-linked (GlcNAc...) asparagine glycosylation sites follow: Asn-268 and Asn-279. His-384 provides a ligand contact to Zn(2+). The active site involves Glu-385. Positions 388 and 394 each coordinate Zn(2+). N-linked (GlcNAc...) asparagine glycosylation is present at Asn-440. The Disintegrin domain occupies 458–552 (QPICGNGMVE…LCPASDPKPN (95 aa)). Residue Asn-552 is glycosylated (N-linked (GlcNAc...) asparagine). The chain crosses the membrane as a helical span at residues 674 to 697 (WIVAHWWAVLLMGIALIMLMAGFI). Over 698–749 (KICSVHTPSSNPKLPPPKPLPGTLKRRRPPQPIQQPPRQRPRESYQMGHMRR) the chain is Cytoplasmic. The segment at 705 to 749 (PSSNPKLPPPKPLPGTLKRRRPPQPIQQPPRQRPRESYQMGHMRR) is disordered. The SH3-binding motif lies at 709–716 (PKLPPPKP). Thr-720 carries the phosphothreonine modification. The SH3-binding signature appears at 723-729 (RRRPPQP). Residues 735-749 (RQRPRESYQMGHMRR) are interaction with AP2A1, AP2A2 and AP2M1.

In terms of assembly, forms a ternary EFNA5-EPHA3-ADAM10 complex mediating EFNA5 extracellular domain shedding by ADAM10 which regulates the EFNA5-EPHA3 complex internalization and function, the cleavage occurs in trans, with ADAM10 and its substrate being on the membranes of opposing cells. Interacts with the clathrin adapter AP2 complex subunits AP2A1, AP2A2, AP2B1, and AP2M1; this interaction facilitates ADAM10 endocytosis from the plasma membrane during long-term potentiation in hippocampal neurons. Forms a ternary complex composed of ADAM10, EPHA4 and CADH1; within the complex, ADAM10 cleaves CADH1 which disrupts adherens junctions. Interacts with EPHA2. Interacts with NGF in a divalent cation-dependent manner. Interacts with TSPAN14; the interaction promotes ADAM10 maturation and cell surface expression. Interacts with TSPAN5, TSPAN10, TSPAN14, TSPAN15, TSPAN17 and TSPAN33; these interactions regulate ADAM10 substrate specificity, endocytosis and turnover. Interacts (via extracellular domain) with TSPAN33 (via extracellular domain) and (via cytoplasmic domain) with AFDN; interaction with TSPAN33 allows the docking of ADAM10 to zonula adherens through a PDZ11-dependent interaction between TSPAN33 and PLEKHA7 while interaction with AFDN locks ADAM10 at zonula adherens. Interacts with DLG1; this interaction recruits ADAM10 to the cell membrane during long-term depression in hippocampal neurons. Interacts (via extracellular domain) with BACE1 (via extracellular domain). Interacts with FAM171A1. It depends on Zn(2+) as a cofactor. Post-translationally, the precursor is cleaved by furin and PCSK7. Expressed in brain, kidney, lung, spleen, ovary and testis.

It localises to the cell membrane. The protein localises to the golgi apparatus membrane. It is found in the cytoplasmic vesicle. Its subcellular location is the clathrin-coated vesicle. The protein resides in the cell projection. It localises to the axon. The protein localises to the dendrite. It is found in the cell junction. Its subcellular location is the adherens junction. The protein resides in the cytoplasm. It catalyses the reaction Endopeptidase of broad specificity.. With respect to regulation, catalytically inactive when the propeptide is intact and associated with the mature enzyme. The disintegrin and cysteine-rich regions modulate access of substrates to exerts an inhibitory effect on the cleavage of ADAM10 substrates. In terms of biological role, transmembrane metalloprotease which mediates the ectodomain shedding of a myriad of transmembrane proteins, including adhesion proteins, growth factor precursors and cytokines being essential for development and tissue homeostasis. Associates with six members of the tetraspanin superfamily TspanC8 which regulate its exit from the endoplasmic reticulum and its substrate selectivity. Cleaves the membrane-bound precursor of TNF-alpha at '76-Ala-|-Val-77' to its mature soluble form. Responsible for the proteolytical release of soluble JAM3 from endothelial cells surface. Responsible for the proteolytic release of several other cell-surface proteins, including heparin-binding epidermal growth-like factor, ephrin-A2, CD44, CDH2 and for constitutive and regulated alpha-secretase cleavage of amyloid precursor protein (APP). Contributes to the normal cleavage of the cellular prion protein. Involved in the cleavage of the adhesion molecule L1 at the cell surface and in released membrane vesicles, suggesting a vesicle-based protease activity. Also controls the proteolytic processing of Notch and mediates lateral inhibition during neurogenesis. Required for the development of type 1 transitional B cells into marginal zone B cells, probably by cleaving Notch. Responsible for the FasL ectodomain shedding and for the generation of the remnant ADAM10-processed FasL (FasL APL) transmembrane form. Also cleaves the ectodomain of the integral membrane proteins CORIN and ITM2B. Mediates the proteolytic cleavage of LAG3, leading to release the secreted form of LAG3. Mediates the proteolytic cleavage of IL6R and IL11RA, leading to the release of secreted forms of IL6R and IL11RA. Enhances the cleavage of CHL1 by BACE1. Cleaves NRCAM. Cleaves TREM2, resulting in shedding of the TREM2 ectodomain. Involved in the development and maturation of glomerular and coronary vasculature. During development of the cochlear organ of Corti, promotes pillar cell separation by forming a ternary complex with CADH1 and EPHA4 and cleaving CADH1 at adherens junctions. May regulate the EFNA5-EPHA3 signaling. Regulates leukocyte transmigration as a sheddase for the adherens junction protein VE-cadherin/CDH5 in endothelial cells. The sequence is that of Disintegrin and metalloproteinase domain-containing protein 10 (Adam10) from Rattus norvegicus (Rat).